We begin with the raw amino-acid sequence, 105 residues long: Thiosulfate sulfurtransferase GlpE (105 aa).

The Rhodanese domain occupies 16-104 (DKEDVVIADI…WEAAYSEKVE (89 aa)). The active-site Cysteine persulfide intermediate is C64.

Belongs to the GlpE family.

It localises to the cytoplasm. It catalyses the reaction thiosulfate + hydrogen cyanide = thiocyanate + sulfite + 2 H(+). The catalysed reaction is thiosulfate + [thioredoxin]-dithiol = [thioredoxin]-disulfide + hydrogen sulfide + sulfite + 2 H(+). Its function is as follows. Transferase that catalyzes the transfer of sulfur from thiosulfate to thiophilic acceptors such as cyanide or dithiols. May function in a CysM-independent thiosulfate assimilation pathway by catalyzing the conversion of thiosulfate to sulfite, which can then be used for L-cysteine biosynthesis. This Pseudoalteromonas translucida (strain TAC 125) protein is Thiosulfate sulfurtransferase GlpE.